Here is a 488-residue protein sequence, read N- to C-terminus: Elongation factor Tu, chloroplastic (488 aa).

Residues 1 to 20 form a disordered region; sequence MALSSTAATTSSKLKLSNPP. A chloroplast-targeting transit peptide spans 1 to 79; it reads MALSSTAATT…RPSSSPFTVR (79 aa). Residues 89–293 enclose the tr-type G domain; sequence KPHLNIGTIG…EVDKYIPIPQ (205 aa). Residues 98-105 are G1; the sequence is GHVDHGKT. Position 98 to 105 (98 to 105) interacts with GTP; it reads GHVDHGKT. A G2 region spans residues 139–143; the sequence is GITIN. The segment at 160 to 163 is G3; that stretch reads DCPG. Residues 160 to 164 and 215 to 218 contribute to the GTP site; these read DCPGH and NKQD. Residues 215–218 are G4; the sequence is NKQD. The interval 253–255 is G5; that stretch reads SAL.

It belongs to the TRAFAC class translation factor GTPase superfamily. Classic translation factor GTPase family. EF-Tu/EF-1A subfamily. Higher expression in leaves than in roots.

The protein resides in the plastid. Its subcellular location is the chloroplast. Functionally, this protein promotes the GTP-dependent binding of aminoacyl-tRNA to the A-site of ribosomes during protein biosynthesis. This Pisum sativum (Garden pea) protein is Elongation factor Tu, chloroplastic (tufA).